A 477-amino-acid polypeptide reads, in one-letter code: UDP-N-acetylmuramate--L-alanine ligase (477 aa).

ATP is bound at residue 112–118 (GAHGKTT).

Belongs to the MurCDEF family.

It is found in the cytoplasm. It carries out the reaction UDP-N-acetyl-alpha-D-muramate + L-alanine + ATP = UDP-N-acetyl-alpha-D-muramoyl-L-alanine + ADP + phosphate + H(+). The protein operates within cell wall biogenesis; peptidoglycan biosynthesis. Cell wall formation. This chain is UDP-N-acetylmuramate--L-alanine ligase, found in Delftia acidovorans (strain DSM 14801 / SPH-1).